The sequence spans 247 residues: Cell division protein ZapD (247 aa).

It belongs to the ZapD family. As to quaternary structure, interacts with FtsZ.

It is found in the cytoplasm. In terms of biological role, cell division factor that enhances FtsZ-ring assembly. Directly interacts with FtsZ and promotes bundling of FtsZ protofilaments, with a reduction in FtsZ GTPase activity. The chain is Cell division protein ZapD from Salmonella arizonae (strain ATCC BAA-731 / CDC346-86 / RSK2980).